The following is a 149-amino-acid chain: MERSLIILKPDAVQRGLIGPILTRIEQRGLRIVGLKLMQIDEALARRHYAIHEGKPFFDSLIAYITSGPVVVLVVTGANVIEMVRSMVGATNPGKAAPGTIRGDFALEIGRNLIHASDSPENGEMEVNLFFRAEELVDMRRSTDQWIYE.

ATP-binding residues include Lys-9, Phe-57, Arg-85, Thr-91, Arg-102, and Asn-112. Catalysis depends on His-115, which acts as the Pros-phosphohistidine intermediate.

Belongs to the NDK family. As to quaternary structure, homotetramer. The cofactor is Mg(2+).

It localises to the cytoplasm. The enzyme catalyses a 2'-deoxyribonucleoside 5'-diphosphate + ATP = a 2'-deoxyribonucleoside 5'-triphosphate + ADP. It catalyses the reaction a ribonucleoside 5'-diphosphate + ATP = a ribonucleoside 5'-triphosphate + ADP. Major role in the synthesis of nucleoside triphosphates other than ATP. The ATP gamma phosphate is transferred to the NDP beta phosphate via a ping-pong mechanism, using a phosphorylated active-site intermediate. In Roseiflexus castenholzii (strain DSM 13941 / HLO8), this protein is Nucleoside diphosphate kinase.